The chain runs to 465 residues: uncharacterized protein (465 aa).

Residues 1 to 50 form the TRAM domain; it reads MEITDLAAEGNALCRIDDMVMFVPFAAPGDRCTVQVVKKKRNFMQGRIVS. [4Fe-4S] cluster-binding residues include C63, C69, C72, and C168. Residues Q293, Y322, E343, and D392 each coordinate S-adenosyl-L-methionine. C419 serves as the catalytic Nucleophile.

This sequence belongs to the class I-like SAM-binding methyltransferase superfamily. RNA M5U methyltransferase family.

This is an uncharacterized protein from Porphyromonas gingivalis (strain ATCC BAA-308 / W83).